The following is a 261-amino-acid chain: MAAESGKIDPMHQFMIEPLFGQGWSIAGHNIAFTNSAMWMVVTLAALLIFMIGGMKRDLVPGRWQAAVESFTGFVAGMMATNIGPEGKKFTPYVFSLFMFILIANIMGMMPTGVVGVHPFTVTSHLTVTGVLAVISFSIVLVVGFWRHGFHFFSLFVPHGTPGYMIPMIFVIELFSFLIRPFSLGLRLFVAMTAGHILMKVLAGFVINGINAGALTVAIVSIPSFILMIGITLLELLVCAIQAYVFALLTSLYLNDAINLH.

7 helical membrane passes run isoleucine 31–methionine 51, tryptophan 64–glycine 84, leucine 97–valine 117, leucine 126–tryptophan 146, isoleucine 166–leucine 188, valine 201–proline 223, and glutamate 235–asparagine 255.

Belongs to the ATPase A chain family. As to quaternary structure, F-type ATPases have 2 components, CF(1) - the catalytic core - and CF(0) - the membrane proton channel. CF(1) has five subunits: alpha(3), beta(3), gamma(1), delta(1), epsilon(1). CF(0) has three main subunits: a(1), b(2) and c(9-12). The alpha and beta chains form an alternating ring which encloses part of the gamma chain. CF(1) is attached to CF(0) by a central stalk formed by the gamma and epsilon chains, while a peripheral stalk is formed by the delta and b chains.

The protein resides in the cell inner membrane. Functionally, key component of the proton channel; it plays a direct role in the translocation of protons across the membrane. The polypeptide is ATP synthase subunit a (Rhizorhabdus wittichii (strain DSM 6014 / CCUG 31198 / JCM 15750 / NBRC 105917 / EY 4224 / RW1) (Sphingomonas wittichii)).